The chain runs to 259 residues: Protein CWC15 homolog (259 aa).

Residues 1–182 are disordered; it reads MTTAARPTFD…EKKQEDERIR (182 aa). Residues 52–71 show a composition bias toward basic and acidic residues; the sequence is DENRNRDFRKELEEREREAR. Composition is skewed to low complexity over residues 72–82 and 114–126; these read SGTGATSSSSG and QQQAQQAAQQQAA. Positions 129 to 150 are enriched in acidic residues; it reads DADEPLDNDSSDSDSDSDDDDA. Residues 150 to 182 adopt a coiled-coil conformation; sequence AALLAELQKIKQERLQETARRESEKKQEDERIR. Residues 157-182 show a composition bias toward basic and acidic residues; the sequence is QKIKQERLQETARRESEKKQEDERIR.

The protein belongs to the CWC15 family.

Its function is as follows. Involved in pre-mRNA splicing. This is Protein CWC15 homolog (c12.1) from Drosophila melanogaster (Fruit fly).